The primary structure comprises 37 residues: Cytochrome b6-f complex subunit 5 (37 aa).

A helical transmembrane segment spans residues 5–25; sequence LLSGIVLGLVPVTITGLFVAA.

This sequence belongs to the PetG family. In terms of assembly, the 4 large subunits of the cytochrome b6-f complex are cytochrome b6, subunit IV (17 kDa polypeptide, PetD), cytochrome f and the Rieske protein, while the 4 small subunits are PetG, PetL, PetM and PetN. The complex functions as a dimer.

It is found in the plastid. It localises to the chloroplast thylakoid membrane. In terms of biological role, component of the cytochrome b6-f complex, which mediates electron transfer between photosystem II (PSII) and photosystem I (PSI), cyclic electron flow around PSI, and state transitions. PetG is required for either the stability or assembly of the cytochrome b6-f complex. This Emiliania huxleyi (Coccolithophore) protein is Cytochrome b6-f complex subunit 5.